Reading from the N-terminus, the 501-residue chain is Actin-binding protein WASF3 (501 aa).

Residues 57–93 are a coiled coil; sequence NEANNFYIRANSLQDRIDRLAVKVTQLDSTVEEVSLQ. The residue at position 151 (Y151) is a Phosphotyrosine; by ABL1. The stretch at 162–206 forms a coiled coil; the sequence is KEKMLQDTEDKRKEKRRQKEQKRVDGTTREVKKVRKARNRRQEWN. The interval 170–443 is disordered; that stretch reads EDKRKEKRRQ…PPISDARSDL (274 aa). The segment covering 182-192 has biased composition (basic and acidic residues); it reads QKRVDGTTREV. The segment covering 219-237 has biased composition (polar residues); the sequence is RLSQSVHHGASSEGSLSPD. Y248 is subject to Phosphotyrosine; by ABL1. A compositionally biased stretch (polar residues) spans 256–267; it reads HALQAQPATPSY. The span at 302 to 312 shows a compositional bias: pro residues; it reads QQPPPPPPPQA. The residue at position 337 (Y337) is a Phosphotyrosine; by ABL1. Composition is skewed to pro residues over residues 341 to 352 and 394 to 410; these read SGPPPPPPPPMI and APPPPGPPPPPPGPPGP. The segment covering 411 to 422 has biased composition (low complexity); the sequence is SSLSSSPMHGPP. The 18-residue stretch at 439–456 folds into the WH2 domain; the sequence is ARSDLLAAIRMGIQLKKV. The residue at position 485 (Y485) is a Phosphotyrosine; by ABL1.

This sequence belongs to the SCAR/WAVE family. In terms of assembly, binds actin and the Arp2/3 complex. Post-translationally, phosphorylation by ABL1 promotes lamellipodia formation and cell migration.

The protein resides in the cytoplasm. The protein localises to the cytoskeleton. Its function is as follows. Downstream effector molecules involved in the transmission of signals from tyrosine kinase receptors and small GTPases to the actin cytoskeleton. Plays a role in the regulation of cell morphology and cytoskeletal organization. Required in the control of cell shape. The chain is Actin-binding protein WASF3 (Wasf3) from Mus musculus (Mouse).